A 772-amino-acid chain; its full sequence is MDSKESLSPPGREEVPSSVLRPAERGNVMDLYKTLRGGAPVRVPASSPSLAPAAQPDSKQQRLAVDFPKGSASNAQQPDLSRAVSLSMGLYMGETETKVMGSDLAFPQQGQTSLSSGETDFRLLEESIASLNRSASGADNPRSTAPAAGSAAPTEGFPKTHSDLASERQNPKGQTGGSAGSAKLHPTDQSTFDILQDLEFSGSPSKDRSESPWRSDLLMDENCLLSPLAGEDDPFLLEGNSSEDCKPLILPDTKPKIKDNGDLILSNSNNVPLPQVKTEKEDFIELCTPGVIKQEKLGPVYCQASFSGANIIGNKISAISVHGVSTSGGQMYHYDMNAQQQEQKPLFNVIPPIPVGSENWNRCQGSGDDNLTSLGTMNFPGRSVFSNGYSSPGMRPDVSSPPSNSTTAAGPPPKLCLVCSDEASGCHYGVLTCGSCKVFFKRAVKGQHNYLCAGRNDCIIDKIRRKNCPACRYRKCLQAGMNLEARKTKKKIKGIQQTSTGVSQETSENPSNRTVVPAALPQLTPTLVSLLEVIEPEVLYAGYDSSVPDSTWRIMTTLNMLGGRQVIAAVKWAKAIPGFRNLHLDDQMTLLQYSWMFLMAFALGWRSYKQSSGNMLCFAPDLVINEQRMTLPYMYDQCKHMLFVSSELKRLQVSYEEYLCMKTLLLLSTVPKEGLKSQELFDEIRMTYIKELGKAIVKREGNSSQNWQRFYQLTKLLDSMHEVVENLLHYCFQTFLDKTMSIEFPEMLAEIITNQIPKYSNGNIKKLLFHQK.

Basic and acidic residues predominate over residues 1 to 15; it reads MDSKESLSPPGREEV. The tract at residues 1–22 is disordered; that stretch reads MDSKESLSPPGREEVPSSVLRP. A modulating region spans residues 1-415; sequence MDSKESLSPP…TTAAGPPPKL (415 aa). At arginine 25 the chain carries Omega-N-methylarginine. The disordered stretch occupies residues 39–82; that stretch reads APVRVPASSPSLAPAAQPDSKQQRLAVDFPKGSASNAQQPDLSR. Residues 44–58 show a composition bias toward low complexity; it reads PASSPSLAPAAQPDS. Phosphoserine occurs at positions 47, 115, 136, and 143. The segment at 132–186 is disordered; it reads NRSASGADNPRSTAPAAGSAAPTEGFPKTHSDLASERQNPKGQTGGSAGSAKLHP. The span at 143–156 shows a compositional bias: low complexity; sequence STAPAAGSAAPTEG. Over residues 158 to 170 the composition is skewed to basic and acidic residues; it reads PKTHSDLASERQN. A phosphoserine mark is found at serine 203, serine 211, and serine 226. Lysine 258 participates in a covalent cross-link: Glycyl lysine isopeptide (Lys-Gly) (interchain with G-Cter in SUMO2). Glycyl lysine isopeptide (Lys-Gly) (interchain with G-Cter in SUMO); alternate cross-links involve residues lysine 277 and lysine 293. Residues lysine 277 and lysine 293 each participate in a glycyl lysine isopeptide (Lys-Gly) (interchain with G-Cter in SUMO2); alternate cross-link. Phosphoserine occurs at positions 307 and 400. Lysine 414 participates in a covalent cross-link: Glycyl lysine isopeptide (Lys-Gly) (interchain with G-Cter in ubiquitin). 2 consecutive NR C4-type zinc fingers follow at residues 416 to 436 and 452 to 476; these read CLVC…CGSC and CAGR…YRKC. Residues 416 to 481 constitute a DNA-binding region (nuclear receptor); it reads CLVCSDEASG…RYRKCLQAGM (66 aa). An N6-acetyllysine mark is found at lysine 475, lysine 487, lysine 489, and lysine 490. Residues 480-772 form an interaction with CLOCK region; the sequence is GMNLEARKTK…NIKKLLFHQK (293 aa). The interval 482-518 is hinge; the sequence is NLEARKTKKKIKGIQQTSTGVSQETSENPSNRTVVPA. Residues 494–513 are disordered; the sequence is GIQQTSTGVSQETSENPSNR. Residues 499-513 are compositionally biased toward polar residues; the sequence is STGVSQETSENPSNR. The NR LBD domain maps to 519–753; sequence ALPQLTPTLV…FPEMLAEIIT (235 aa). An interaction with CRY1 region spans residues 527–692; it reads LVSLLEVIEP…EIRMTYIKEL (166 aa). A Glycyl lysine isopeptide (Lys-Gly) (interchain with G-Cter in SUMO) cross-link involves residue lysine 698.

It belongs to the nuclear hormone receptor family. NR3 subfamily. As to quaternary structure, heteromultimeric cytoplasmic complex with HSP90AA1, HSPA1A/HSPA1B, and FKBP5 or another immunophilin such as PPID, STIP1, or the immunophilin homolog PPP5C. Upon ligand binding FKBP5 dissociates from the complex and FKBP4 takes its place, thereby linking the complex to dynein and mediating transport to the nucleus, where the complex dissociates. Probably forms a complex composed of chaperones HSP90 and HSP70, co-chaperones CDC37, PPP5C, TSC1 and client protein TSC2, CDK4, AKT, RAF1 and NR3C1; this complex does not contain co-chaperones STIP1/HOP and PTGES3/p23. Directly interacts with UNC45A. Binds to DNA as a homodimer, and as heterodimer with NR3C2 or the retinoid X receptor. Binds STAT5A and STAT5B homodimers and heterodimers. Interacts with NRIP1, POU2F1, POU2F2 and TRIM28. Interacts with several coactivator complexes, including the SMARCA4 complex, CREBBP/EP300, TADA2L (Ada complex) and p160 coactivators such as NCOA2 and NCOA6. Interaction with BAG1 inhibits transactivation. Interacts with HEXIM1 and TGFB1I1. Interacts with NCOA1. Interacts with NCOA3, SMARCA4, SMARCC1, SMARCD1, and SMARCE1. Interacts with CLOCK, CRY1 and CRY2 in a ligand-dependent fashion. Interacts with CIART. Interacts with RWDD3. Interacts with UBE2I/UBC9 and this interaction is enhanced in the presence of RWDD3. Interacts with GRIP1. Interacts with NR4A3 (via nuclear receptor DNA-binding domain), represses transcription activity of NR4A3 on the POMC promoter Nur response element (NurRE). Directly interacts with PNRC2 to attract and form a complex with UPF1 and DCP1A; the interaction leads to rapid mRNA degradation. Interacts with GSK3B. Interacts with FNIP1 and FNIP2. Interacts (via C-terminus) with HNRNPU (via C-terminus). Interacts with MCM3AP. Interacts (via domain NR LBD) with HSP90AA1 and HSP90AB1. In the absence of hormonal ligand, interacts with TACC1. Interacts (via NR LBD domain) with ZNF764 (via KRAB domain); the interaction regulates transcription factor activity of NR3C1 by directing its actions toward certain biologic pathways. Post-translationally, acetylation by CLOCK reduces its binding to glucocorticoid response elements and its transcriptional activity. In terms of processing, increased proteasome-mediated degradation in response to glucocorticoids. Phosphorylated in the absence of hormone; becomes hyperphosphorylated in the presence of glucocorticoid. The Ser-203, Ser-226 and Ser-399-phosphorylated forms are mainly cytoplasmic, and the Ser-211-phosphorylated form is nuclear. Phosphorylation at Ser-211 increases transcriptional activity. Phosphorylation at Ser-203, Ser-226 and Ser-399 decreases signaling capacity. Phosphorylation at Ser-399 may protect from glucocorticoid-induced apoptosis. Phosphorylation at Ser-203 and Ser-211 is not required in regulation of chromosome segregation. May be dephosphorylated by PPP5C, attenuates NR3C1 action. Post-translationally, ubiquitinated by UBR5, leading to its degradation: UBR5 specifically recognizes and binds ligand-bound NR3C1 when it is not associated with coactivators (NCOAs). In presence of NCOAs, the UBR5-degron is not accessible, preventing its ubiquitination and degradation. In terms of processing, sumoylation at Lys-277 and Lys-293 negatively regulates its transcriptional activity. Sumoylation at Lys-698 positively regulates its transcriptional activity in the presence of RWDD3. Sumoylation at Lys-277 and Lys-293 is dispensable whereas sumoylation at Lys-698 is critical for the stimulatory effect of RWDD3 on its transcriptional activity. Heat shock increases sumoylation in a RWDD3-dependent manner.

Its subcellular location is the cytoplasm. The protein localises to the nucleus. It is found in the mitochondrion. It localises to the cytoskeleton. The protein resides in the spindle. Its subcellular location is the microtubule organizing center. The protein localises to the centrosome. It is found in the chromosome. It localises to the nucleoplasm. In terms of biological role, receptor for glucocorticoids (GC). Has a dual mode of action: as a transcription factor that binds to glucocorticoid response elements (GRE), both for nuclear and mitochondrial DNA, and as a modulator of other transcription factors. Affects inflammatory responses, cellular proliferation and differentiation in target tissues. Involved in chromatin remodeling. Plays a role in rapid mRNA degradation by binding to the 5' UTR of target mRNAs and interacting with PNRC2 in a ligand-dependent manner which recruits the RNA helicase UPF1 and the mRNA-decapping enzyme DCP1A, leading to RNA decay. Could act as a coactivator for STAT5-dependent transcription upon growth hormone (GH) stimulation and could reveal an essential role of hepatic GR in the control of body growth. Mediates glucocorticoid-induced apoptosis. Promotes accurate chromosome segregation during mitosis. May act as a tumor suppressor. May play a negative role in adipogenesis through the regulation of lipolytic and antilipogenic gene expression. The chain is Glucocorticoid receptor (NR3C1) from Oryctolagus cuniculus (Rabbit).